The chain runs to 310 residues: Serine protease 30 (310 aa).

The first 21 residues, 1-21 (MESRARCIFLLLLQILTRARG), serve as a signal peptide directing secretion. A propeptide spans 22–36 (DILPSVCGHSRDAGK) (activation peptide). Residues 37 to 277 (IVGGQDALEG…YVDWIQRILA (241 aa)) enclose the Peptidase S1 domain. A disulfide bond links C63 and C79. Catalysis depends on charge relay system residues H78 and D128. Intrachain disulfides connect C161-C235, C191-C214, and C225-C253. The Charge relay system role is filled by S229. 2 N-linked (GlcNAc...) asparagine glycosylation sites follow: N238 and N279. S281 is lipidated: GPI-anchor amidated serine. Positions 282–310 (DAYGYHSSASAAYQMLLPVLLAVALPGSL) are cleaved as a propeptide — removed in mature form.

The protein belongs to the peptidase S1 family. As to expression, expressed primarily in distal gut.

The protein resides in the cell membrane. With respect to regulation, inhibited by aprotinin, leupeptin, benzamidine and soybean trypsin inhibitor. Partially inhibited by PMSF and DFP. Functionally, selectively cleaves synthetic peptide substrates of trypsin. Activates the epithelial sodium channel ENaC. The chain is Serine protease 30 (Prss30) from Mus musculus (Mouse).